The sequence spans 3372 residues: Breast cancer type 2 susceptibility protein homolog (3372 aa).

An interaction with PALB2 region spans residues 1-40; sequence MPIGCKERPTFFEIFRTRCNKADLGPISLNWFEELCLEAP. A disordered region spans residues 234–260; the sequence is DRFIPSGPDSENKSQREAKSQGLGKMV. Basic and acidic residues predominate over residues 243-252; the sequence is SENKSQREAK. A phosphoserine mark is found at serine 435 and serine 483. The segment at 630 to 992 is interaction with NPM1; sequence LHSSVKKTCL…DNWARLSDPI (363 aa). The segment at 704–783 is disordered; sequence LQEKHCEDDT…VGLSRGRESY (80 aa). The segment covering 705 to 725 has biased composition (basic and acidic residues); the sequence is QEKHCEDDTKSQRVADRKEEI. The span at 748 to 763 shows a compositional bias: polar residues; it reads TLKSFSSDPDKSSQLT. BRCA2 repeat units lie at residues 994-1028, 1208-1242, 1417-1451, 1518-1552, and 1663-1697; these read NHNFGNGFRTASNKEIKLSEHNIKKSKMLFKDIEE, NEVEFRGFYSARGTKLNVCSEALQKAKKLFSDLEN, FDIFDVSFQTASGKNIRVSRASLNKVTNLLDQKCT, KEPTILGFHTASGKRIEIAKESLDKVKNLFDEQEQ, and TENSALSFYTGHGRKISVSQSSILEVKKWLRGGEL. The tract at residues 995-2026 is interaction with RAD51; sequence HNFGNGFRTA…LCKVKGILEE (1032 aa). The disordered stretch occupies residues 1867 to 1891; the sequence is CSSPSHKDFAETQSEQTPQLNQSIS. Residues 1877 to 1891 show a composition bias toward polar residues; sequence ETQSEQTPQLNQSIS. Serine 1924 bears the Phosphoserine mark. The stretch at 1925-1959 is one BRCA2 6 repeat; that stretch reads YTNACGIFSTASGKCVQVSDAALQKARQVFSKVED. Threonine 1990 carries the post-translational modification Phosphothreonine. The stretch at 1995–2029 is one BRCA2 7 repeat; the sequence is LSSAFSGFSTASGKQVPVSESALCKVKGILEEFDV. The segment at 2034–2062 is disordered; that stretch reads CGPQRSPTSRQDVSKMPPPSCVENKTPKH. The residue at position 2039 (serine 2039) is a Phosphoserine. Residues 2213 to 2279 form an interaction with HSF2BP region; the sequence is GKRRGVLVSV…EPVTCGPFST (67 aa). The span at 2359-2387 shows a compositional bias: basic and acidic residues; the sequence is LQDEQHISKNTHVEENKQKPNNIDEHSSG. Residues 2359-2395 form a disordered region; the sequence is LQDEQHISKNTHVEENKQKPNNIDEHSSGDSKNNINN. Residues 2425-2776 are interaction with SEM1; it reads IASLQNARDI…QRTYPIQWME (352 aa). The short motif at 2626 to 2642 is the Nuclear export signal; masked by interaction with SEM1 element; that stretch reads AAKTLVLCISETISSST. A disordered region spans residues 3181–3203; the sequence is AKSVPTPGSAQMTSKSCYKGERE. Over residues 3186–3196 the composition is skewed to polar residues; it reads TPGSAQMTSKS. The residue at position 3236 (serine 3236) is a Phosphoserine; by CDK1 and CDK2. Serine 3264 carries the phosphoserine modification. A compositionally biased stretch (polar residues) spans 3308 to 3321; that stretch reads SLNDSPRTAPTSSK. A disordered region spans residues 3308–3372; the sequence is SLNDSPRTAP…MRLQRRQQQT (65 aa). Threonine 3331 is modified (phosphothreonine; by CHEK1 and CHEK2). The segment covering 3361–3372 has biased composition (basic residues); the sequence is SSMRLQRRQQQT.

In terms of assembly, monomer and dimer. Interacts with RAD51; regulates RAD51 recruitment and function at sites of DNA repair. Interacts with SEM1, WDR16, USP11, DMC1, ROCK2 and NPM1. Interacts with both nonubiquitinated and monoubiquitinated FANCD2; this complex also includes XRCC3 and phosphorylated FANCG. Part of a BRCA complex containing BRCA1, BRCA2 and PALB2. Component of the homologous recombination repair (HR) complex composed of ERCC5/XPG, BRCA2, PALB2, DSS1 and RAD51. Within the complex, interacts with ERCC5/XPG and PALB2. Interacts directly with PALB2 which may serve as a scaffold for a HR complex containing PALB2, BRCA2, RAD51C, RAD51 and XRCC3. Interacts with BRCA1 only in the presence of PALB2 which serves as the bridging protein. Interacts with POLH; the interaction is direct. Interacts with the TREX-2 complex subunits PCID2 and SEM1. Interacts with HSF2BP and BRME1; the interaction with HSF2BP is direct and allows the formation of a ternary complex. The complex BRME1:HSF2BP:BRCA2 interacts with SPATA22, MEIOB and RAD51. Phosphorylated by ATM upon irradiation-induced DNA damage. Phosphorylation by CHEK1 and CHEK2 regulates interaction with RAD51. Phosphorylation at Ser-3236 by CDK1 and CDK2 is low in S phase when recombination is active, but increases as cells progress towards mitosis; this phosphorylation prevents homologous recombination-dependent repair during S phase and G2 by inhibiting RAD51 binding. In terms of processing, ubiquitinated in the absence of DNA damage; this does not lead to proteasomal degradation. In contrast, ubiquitination in response to DNA damage leads to proteasomal degradation.

The protein localises to the nucleus. It localises to the cytoplasm. Its subcellular location is the cytoskeleton. It is found in the microtubule organizing center. The protein resides in the centrosome. In terms of biological role, involved in double-strand break repair and/or homologous recombination. Binds RAD51 and potentiates recombinational DNA repair by promoting assembly of RAD51 onto single-stranded DNA (ssDNA). Acts by targeting RAD51 to ssDNA over double-stranded DNA, enabling RAD51 to displace replication protein-A (RPA) from ssDNA and stabilizing RAD51-ssDNA filaments by blocking ATP hydrolysis. Part of a PALB2-scaffolded HR complex containing RAD51C and which is thought to play a role in DNA repair by HR. May participate in S phase checkpoint activation. Binds selectively to ssDNA, and to ssDNA in tailed duplexes and replication fork structures. May play a role in the extension step after strand invasion at replication-dependent DNA double-strand breaks; together with PALB2 is involved in both POLH localization at collapsed replication forks and DNA polymerization activity. In concert with NPM1, regulates centrosome duplication. Interacts with the TREX-2 complex (transcription and export complex 2) subunits PCID2 and SEM1, and is required to prevent R-loop-associated DNA damage and thus transcription-associated genomic instability, independently of its known role in homologous recombination. This is Breast cancer type 2 susceptibility protein homolog (BRCA2) from Felis catus (Cat).